The sequence spans 22 residues: NADH dehydrogenase [ubiquinone] 1 alpha subcomplex subunit 9 (22 aa).

Residues 1 to 22 (ASNLATGGAGPLIXKGTGGRSS) form a disordered region.

Belongs to the complex I NDUFA9 subunit family. As to quaternary structure, complex I is composed of about 45 different subunits. The cofactor is FAD.

It is found in the mitochondrion matrix. Its function is as follows. Accessory subunit of the mitochondrial membrane respiratory chain NADH dehydrogenase (Complex I), that is believed not to be involved in catalysis. Complex I functions in the transfer of electrons from NADH to the respiratory chain. The immediate electron acceptor for the enzyme is believed to be ubiquinone. This is NADH dehydrogenase [ubiquinone] 1 alpha subcomplex subunit 9 from Solanum tuberosum (Potato).